The sequence spans 508 residues: Acetyl-coenzyme A carboxylase carboxyl transferase subunit beta, chloroplastic (508 aa).

Disordered regions lie at residues 30-51 (PIEN…NIQG) and 173-234 (NSSN…SSTH). Residues 35–47 (SESKDPNRNDTDK) show a composition bias toward basic and acidic residues. Positions 173–219 (NSSNNNSSNENSSNENSSNENSSNENSSNDYISSSISSQSENSSQNE) are enriched in low complexity. Positions 220–234 (DITTSDQTIPESSTH) are enriched in polar residues. Positions 244-508 (LWVQCENCYG…LHTFFPLNQN (265 aa)) constitute a CoA carboxyltransferase N-terminal domain. Residues cysteine 248, cysteine 251, cysteine 267, and cysteine 270 each coordinate Zn(2+). The C4-type zinc finger occupies 248-270 (CENCYGLNYKKFFKSKMHLCEQC).

Belongs to the AccD/PCCB family. As to quaternary structure, acetyl-CoA carboxylase is a heterohexamer composed of biotin carboxyl carrier protein, biotin carboxylase and 2 subunits each of ACCase subunit alpha and ACCase plastid-coded subunit beta (accD). Zn(2+) serves as cofactor.

The protein resides in the plastid. It localises to the chloroplast stroma. It carries out the reaction N(6)-carboxybiotinyl-L-lysyl-[protein] + acetyl-CoA = N(6)-biotinyl-L-lysyl-[protein] + malonyl-CoA. It participates in lipid metabolism; malonyl-CoA biosynthesis; malonyl-CoA from acetyl-CoA: step 1/1. In terms of biological role, component of the acetyl coenzyme A carboxylase (ACC) complex. Biotin carboxylase (BC) catalyzes the carboxylation of biotin on its carrier protein (BCCP) and then the CO(2) group is transferred by the transcarboxylase to acetyl-CoA to form malonyl-CoA. The protein is Acetyl-coenzyme A carboxylase carboxyl transferase subunit beta, chloroplastic of Lactuca sativa (Garden lettuce).